The primary structure comprises 482 residues: Chitobiosyldiphosphodolichol beta-mannosyltransferase (482 aa).

Residues 1-2 (MA) lie on the Lumenal side of the membrane. Residues 3–23 (ASCVALLVLALLLLVLLLGLW) form a helical membrane-spanning segment. Residues 24–99 (KRGRQTGRAR…DLRGLGAGPR (76 aa)) are Cytoplasmic-facing. An intramembrane region (helical) is located at residues 100 to 120 (ILQYGVKVVFQAVYLLWKMMR). The Cytoplasmic portion of the chain corresponds to 121 to 482 (MDPAAYIFLQ…PCGHPSCRGF (362 aa)). Residue S242 is modified to Phosphoserine.

The protein belongs to the glycosyltransferase group 1 family. Glycosyltransferase 33 subfamily.

The protein resides in the endoplasmic reticulum membrane. The enzyme catalyses an N,N'-diacetylchitobiosyl-diphospho-di-trans,poly-cis-dolichol + GDP-alpha-D-mannose = a beta-D-Man-(1-&gt;4)-beta-D-GlcNAc-(1-&gt;4)-alpha-D-GlcNAc-diphospho-di-trans,poly-cis-dolichol + GDP + H(+). Its pathway is protein modification; protein glycosylation. Functionally, mannosyltransferase that operates in the biosynthetic pathway of dolichol-linked oligosaccharides, the glycan precursors employed in protein asparagine (N)-glycosylation. The assembly of dolichol-linked oligosaccharides begins on the cytosolic side of the endoplasmic reticulum membrane and finishes in its lumen. The sequential addition of sugars to dolichol pyrophosphate produces dolichol-linked oligosaccharides containing fourteen sugars, including two GlcNAcs, nine mannoses and three glucoses. Once assembled, the oligosaccharide is transferred from the lipid to nascent proteins by oligosaccharyltransferases. Catalyzes, on the cytoplasmic face of the endoplasmic reticulum, the addition of the first mannose residues to the dolichol-linked oligosaccharide chain, to produce Man1GlcNAc(2)-PP-dolichol core oligosaccharide. Man1GlcNAc(2)-PP-dolichol is a substrate for ALG2, the following enzyme in the biosynthetic pathway. This Mus musculus (Mouse) protein is Chitobiosyldiphosphodolichol beta-mannosyltransferase.